Consider the following 452-residue polypeptide: D-inositol 3-phosphate glycosyltransferase (452 aa).

Residue His25 coordinates 1D-myo-inositol 3-phosphate. UDP-N-acetyl-alpha-D-glucosamine contacts are provided by residues 31–32 and Gly39; that span reads QP. Residues 36–41, Lys94, Tyr127, Thr151, and Arg171 contribute to the 1D-myo-inositol 3-phosphate site; that span reads DAGGMN. Residues Arg245, Lys250, and Gln309 each contribute to the UDP-N-acetyl-alpha-D-glucosamine site. Mg(2+)-binding residues include Tyr318, Arg319, and Ser321. 2 residues coordinate UDP-N-acetyl-alpha-D-glucosamine: Glu331 and Glu339. Thr345 serves as a coordination point for Mg(2+).

It belongs to the glycosyltransferase group 1 family. MshA subfamily. In terms of assembly, homodimer.

The enzyme catalyses 1D-myo-inositol 3-phosphate + UDP-N-acetyl-alpha-D-glucosamine = 1D-myo-inositol 2-acetamido-2-deoxy-alpha-D-glucopyranoside 3-phosphate + UDP + H(+). Its function is as follows. Catalyzes the transfer of a N-acetyl-glucosamine moiety to 1D-myo-inositol 3-phosphate to produce 1D-myo-inositol 2-acetamido-2-deoxy-glucopyranoside 3-phosphate in the mycothiol biosynthesis pathway. The protein is D-inositol 3-phosphate glycosyltransferase of Rhodococcus jostii (strain RHA1).